Reading from the N-terminus, the 265-residue chain is Synaptoporin (265 aa).

Residues 1–4 lie on the Cytoplasmic side of the membrane; that stretch reads MCMV. The region spanning 1 to 202 is the MARVEL domain; sequence MCMVIFAPLF…NIWFVFKETG (202 aa). Residues 5–25 form a helical membrane-spanning segment; sequence IFAPLFAIFAFATCGGYSGGL. The Vesicular portion of the chain corresponds to 26–81; that stretch reads RLSVDCVNKTESNLSIDIAFAYPFRLHQVTFEVPTCEGKERQKLALVGDSSSSAEF. N-linked (GlcNAc...) asparagine glycans are attached at residues N33 and N38. The helical transmembrane segment at 82–102 threads the bilayer; it reads FVTVAVFAFLYSLAATVVYIF. Residues 103–114 are Cytoplasmic-facing; the sequence is FQNKYRENNRGP. The chain crosses the membrane as a helical span at residues 115-135; it reads LIDFIVTVVFSFLWLVGSSAW. The Vesicular segment spans residues 136–177; it reads AKGLSDVKVATDPKEVLLLMSACKQPSNKCMAVHSPVMSSLN. N177 is a glycosylation site (N-linked (GlcNAc...) asparagine). Residues 178–198 traverse the membrane as a helical segment; it reads TSVVFGFLNFILWAGNIWFVF. Residues 199 to 265 are Cytoplasmic-facing; that stretch reads KETGWHSSGQ…SGPTSFNNQI (67 aa). The stretch at 210–214 is repeat 1; that stretch reads YLSDP. Residues 210–242 form a 5 X approximate repeats region; sequence YLSDPMEKHSSSYNQGGYNQDSYGSSGGYSQQA. S212 and S220 each carry phosphoserine. The tract at residues 221 to 265 is disordered; it reads SYNQGGYNQDSYGSSGGYSQQASLGPTSDEFGQQPSGPTSFNNQI. Tandem repeats lie at residues 222-226, 227-231, 232-236, and 238-242. Positions 224-243 are enriched in low complexity; it reads QGGYNQDSYGSSGGYSQQAS. Residues 244-265 show a composition bias toward polar residues; that stretch reads LGPTSDEFGQQPSGPTSFNNQI.

The protein belongs to the synaptophysin/synaptobrevin family. In terms of tissue distribution, central nervous system.

Its subcellular location is the cytoplasmic vesicle. The protein localises to the secretory vesicle. It is found in the synaptic vesicle membrane. It localises to the synapse. The protein resides in the synaptosome. Intrinsic membrane protein of small synaptic vesicles. Probable vesicular channel protein. This chain is Synaptoporin (Synpr), found in Rattus norvegicus (Rat).